Here is a 182-residue protein sequence, read N- to C-terminus: Heat shock protein beta-2 (182 aa).

The region spanning 55-163 (PAGEGSRAGA…DTEVNEVYIS (109 aa)) is the sHSP domain.

Belongs to the small heat shock protein (HSP20) family. Interacts with DMPK; may enhance its kinase activity. As to expression, expressed preferentially in skeletal muscle and heart but not in the lens.

It is found in the cytoplasm. The protein resides in the nucleus. Functionally, may regulate the kinase DMPK. This Homo sapiens (Human) protein is Heat shock protein beta-2 (HSPB2).